Consider the following 1811-residue polypeptide: Protein virilizer homolog (1811 aa).

Ala2 is subject to N-acetylalanine. A disordered region spans residues 132–302; sequence ISHDRDSPPP…EGDDGYEQIS (171 aa). Phosphoserine occurs at positions 133 and 138. Positions 139 to 152 are enriched in pro residues; sequence PPPPPPPPPPPQPQ. A compositionally biased stretch (basic and acidic residues) spans 160–169; sequence KHADGEKEDQ. Residue Ser173 is modified to Phosphoserine. Over residues 174-190 the composition is skewed to pro residues; the sequence is PPRPQPRGPRTPPGPPP. Thr184 carries the phosphothreonine modification. Residue Ser222 is modified to Phosphoserine. A compositionally biased stretch (polar residues) spans 224–233; it reads DRNSVPQEGQ. Composition is skewed to acidic residues over residues 234-267 and 274-302; these read YSDE…DEDD and IPDD…EQIS. Tyr913 is subject to Phosphotyrosine. At Ser1578 the chain carries Phosphoserine. Disordered stretches follow at residues 1615–1634 and 1662–1811; these read HVVP…GIRP and KEVV…SFTR. The segment covering 1688-1697 has biased composition (gly residues); it reads GFSGNRGGRG. Thr1707 bears the Phosphothreonine mark. Arg1722 carries the omega-N-methylarginine modification. A compositionally biased stretch (polar residues) spans 1722–1747; that stretch reads RGSSWSAQNTPRGNYNESRGGQSNFN. At Arg1740 the chain carries Asymmetric dimethylarginine; alternate. Arg1740 carries the post-translational modification Omega-N-methylarginine; alternate. Asymmetric dimethylarginine occurs at positions 1772, 1774, and 1792. Over residues 1787 to 1801 the composition is skewed to gly residues; that stretch reads GSGGSRGKFVSGGSG. A compositionally biased stretch (basic residues) spans 1802–1811; it reads RGRHVRSFTR.

Belongs to the vir family. Component of the WMM complex, a N6-methyltransferase complex composed of a catalytic subcomplex, named MAC, and of an associated subcomplex, named MACOM. The MAC subcomplex is composed of METTL3 and METTL14. The MACOM subcomplex is composed of WTAP, ZC3H13, CBLL1/HAKAI, VIRMA, and, in some cases of RBM15 (RBM15 or RBM15B). Interacts with WTAP. Also a component of a MACOM-like complex, named WTAP complex, composed of WTAP, ZC3H13, CBLL1, VIRMA, RBM15, BCLAF1 and THRAP3. Interacts with NUDT21 and CPSF6.

It is found in the nucleus speckle. It localises to the nucleus. The protein resides in the nucleoplasm. The protein localises to the cytoplasm. In terms of biological role, associated component of the WMM complex, a complex that mediates N6-methyladenosine (m6A) methylation of RNAs, a modification that plays a role in the efficiency of mRNA splicing and RNA processing. Acts as a key regulator of m6A methylation by promoting m6A methylation of mRNAs in the 3'-UTR near the stop codon: recruits the catalytic core components METTL3 and METTL14, thereby guiding m6A methylation at specific sites. Required for mRNA polyadenylation via its role in selective m6A methylation: m6A methylation of mRNAs in the 3'-UTR near the stop codon correlating with alternative polyadenylation (APA). The sequence is that of Protein virilizer homolog from Mus musculus (Mouse).